The chain runs to 219 residues: Proteasome subunit beta type-9 (219 aa).

The propeptide at 1–20 (MLRAGAPTAGSFRTKEVHTG) is removed in mature form. The active-site Nucleophile is the Thr21. Lys53 and Lys109 each carry N6-acetyllysine.

It belongs to the peptidase T1B family. In terms of assembly, the 26S proteasome consists of a 20S proteasome core and two 19S regulatory subunits. The 20S proteasome core is composed of 28 subunits that are arranged in four stacked rings, resulting in a barrel-shaped structure. The two end rings are each formed by seven alpha subunits, and the two central rings are each formed by seven beta subunits. The catalytic chamber with the active sites is on the inside of the barrel. Component of the immunoproteasome, where it displaces the equivalent housekeeping subunit PSMB6. Component of the spermatoproteasome, a form of the proteasome specifically found in testis. Autocleaved. The resulting N-terminal Thr residue of the mature subunit is responsible for the nucleophile proteolytic activity.

It is found in the cytoplasm. Its subcellular location is the nucleus. It carries out the reaction Cleavage of peptide bonds with very broad specificity.. Its function is as follows. The proteasome is a multicatalytic proteinase complex which is characterized by its ability to cleave peptides with Arg, Phe, Tyr, Leu, and Glu adjacent to the leaving group at neutral or slightly basic pH. The proteasome has an ATP-dependent proteolytic activity. This subunit is involved in antigen processing to generate class I binding peptides. This chain is Proteasome subunit beta type-9 (Psmb9), found in Mus platythrix (Flat-haired mouse).